The following is a 257-amino-acid chain: Probable septum site-determining protein MinC (257 aa).

Residues 123 to 141 are compositionally biased toward low complexity; that stretch reads AVEAAAAPAAEPTPEPGAA. The disordered stretch occupies residues 123-144; it reads AVEAAAAPAAEPTPEPGAASQP.

This sequence belongs to the MinC family. As to quaternary structure, interacts with MinD and FtsZ.

Functionally, cell division inhibitor that blocks the formation of polar Z ring septums. Rapidly oscillates between the poles of the cell to destabilize FtsZ filaments that have formed before they mature into polar Z rings. Prevents FtsZ polymerization. The polypeptide is Probable septum site-determining protein MinC (Burkholderia multivorans (strain ATCC 17616 / 249)).